The following is a 171-amino-acid chain: MMVKFLLLALVFGLAHVHAHDHPELQGQWKTTAIMADNIDKIETSGPLELFVREITCDEGCQKMKVTFYVKQNGQCSLTTVTGYKQEDGKTFKNQYEGENNYKLLKATSENLVFYDENVDRASRKTKLLYILGKGEALTHEQKERLTELATQKGIPAGNLRELAHEDTCPE.

A signal peptide spans 1 to 19 (MMVKFLLLALVFGLAHVHA). Disulfide bonds link Cys-57-Cys-61 and Cys-76-Cys-169.

Belongs to the calycin superfamily. Lipocalin family. As to quaternary structure, may form a heterodimer with OBP1A. In terms of processing, the N-terminus may be blocked. In terms of tissue distribution, expressed in nasal mucosa (at protein level). Specifically detected in septal and lateral nasal glands.

Its subcellular location is the secreted. Its function is as follows. Binds the chemical odorant 2-isobutyl-3-methoxypyrazine. This Mus musculus (Mouse) protein is Odorant-binding protein 1b.